The chain runs to 191 residues: Fe/S biogenesis protein NfuA (191 aa).

Residues Cys-149 and Cys-152 each contribute to the [4Fe-4S] cluster site.

Belongs to the NfuA family. Homodimer. [4Fe-4S] cluster is required as a cofactor.

Involved in iron-sulfur cluster biogenesis. Binds a 4Fe-4S cluster, can transfer this cluster to apoproteins, and thereby intervenes in the maturation of Fe/S proteins. Could also act as a scaffold/chaperone for damaged Fe/S proteins. In Salmonella choleraesuis (strain SC-B67), this protein is Fe/S biogenesis protein NfuA.